Consider the following 154-residue polypeptide: Small ribosomal subunit protein bS6 (154 aa).

Positions 97-154 (DSEPSAMMQKRDRDDRKDRERGRRRDDEGFGGGGGFGGDRGDRGDRGDRGERSFGGEG) are disordered. Composition is skewed to basic and acidic residues over residues 105 to 124 (QKRD…RDDE) and 135 to 154 (DRGD…GGEG).

This sequence belongs to the bacterial ribosomal protein bS6 family.

In terms of biological role, binds together with bS18 to 16S ribosomal RNA. This is Small ribosomal subunit protein bS6 from Methylobacterium radiotolerans (strain ATCC 27329 / DSM 1819 / JCM 2831 / NBRC 15690 / NCIMB 10815 / 0-1).